We begin with the raw amino-acid sequence, 169 residues long: Inorganic pyrophosphatase (169 aa).

Substrate is bound by residues K20, R34, and Y46. Mg(2+) is bound by residues D56, D61, and D93. Y130 serves as a coordination point for substrate.

The protein belongs to the PPase family. Homohexamer. It depends on Mg(2+) as a cofactor.

It localises to the cytoplasm. The catalysed reaction is diphosphate + H2O = 2 phosphate + H(+). Catalyzes the hydrolysis of inorganic pyrophosphate (PPi) forming two phosphate ions. The protein is Inorganic pyrophosphatase of Methanosarcina mazei (strain ATCC BAA-159 / DSM 3647 / Goe1 / Go1 / JCM 11833 / OCM 88) (Methanosarcina frisia).